Reading from the N-terminus, the 103-residue chain is U-scoloptoxin(24)-Er1a (103 aa).

An N-terminal signal peptide occupies residues 1–23 (MVKSLHCLIGIVLFLAILNAGNG).

It belongs to the scoloptoxin-24 family. Contains 1 disulfide bond. In terms of tissue distribution, expressed by the venom gland.

It is found in the secreted. This chain is U-scoloptoxin(24)-Er1a, found in Ethmostigmus rubripes (Giant centipede).